The following is a 134-amino-acid chain: Large ribosomal subunit protein eL14y (134 aa).

This sequence belongs to the eukaryotic ribosomal protein eL14 family.

The protein is Large ribosomal subunit protein eL14y (RPL14B) of Arabidopsis thaliana (Mouse-ear cress).